Here is a 174-residue protein sequence, read N- to C-terminus: NADPH-dependent 7-cyano-7-deazaguanine reductase (174 aa).

Catalysis depends on Cys72, which acts as the Thioimide intermediate. Asp79 serves as the catalytic Proton donor. Substrate-binding positions include 94–96 and 113–114; these read VES and HE.

Belongs to the GTP cyclohydrolase I family. QueF type 1 subfamily.

It is found in the cytoplasm. The enzyme catalyses 7-aminomethyl-7-carbaguanine + 2 NADP(+) = 7-cyano-7-deazaguanine + 2 NADPH + 3 H(+). It participates in tRNA modification; tRNA-queuosine biosynthesis. In terms of biological role, catalyzes the NADPH-dependent reduction of 7-cyano-7-deazaguanine (preQ0) to 7-aminomethyl-7-deazaguanine (preQ1). The protein is NADPH-dependent 7-cyano-7-deazaguanine reductase of Synechococcus elongatus (strain ATCC 33912 / PCC 7942 / FACHB-805) (Anacystis nidulans R2).